The chain runs to 337 residues: Protein RecA (337 aa).

Residue 66 to 73 (GPESSGKT) coordinates ATP.

This sequence belongs to the RecA family.

It localises to the cytoplasm. Functionally, can catalyze the hydrolysis of ATP in the presence of single-stranded DNA, the ATP-dependent uptake of single-stranded DNA by duplex DNA, and the ATP-dependent hybridization of homologous single-stranded DNAs. It interacts with LexA causing its activation and leading to its autocatalytic cleavage. The protein is Protein RecA of Mesomycoplasma hyopneumoniae (strain 232) (Mycoplasma hyopneumoniae).